Reading from the N-terminus, the 636-residue chain is C-terminal binding protein AN (636 aa).

The segment at 1 to 21 (MSKIRSSATMPHRDQPSPASP) is disordered. NAD(+) is bound by residues S91, 147-148 (WL), 169-174 (VGRSVS), D193, 231-237 (CALTNDT), 258-260 (TGS), D284, and 307-311 (RSADY). Residues 341–489 (VSDEEVEESE…PLEVMQESSP (149 aa)) form a disordered region. Over residues 342–357 (SDEEVEESEASEEEEQ) the composition is skewed to acidic residues. Residues 369-384 (ESTSRQQGESTLTSTE) show a composition bias toward polar residues. A compositionally biased stretch (basic and acidic residues) spans 385-395 (IVRREASELKE). The segment covering 398-409 (SPGQQHVSQNTA) has biased composition (polar residues). Over residues 417–429 (SRSGKKAKKRHSQ) the composition is skewed to basic residues. Over residues 430 to 445 (QKYMQKTDGSSGLNEE) the composition is skewed to polar residues. Basic and acidic residues predominate over residues 470-480 (SPEDSRSRKTP).

It belongs to the D-isomer specific 2-hydroxyacid dehydrogenase family. Plant AN subfamily. As to quaternary structure, homodimer. Interacts with KCBP and SUB (via intra-cellular domain); AN is not required for the correct subcellular localization and recycling of SUB. Binds to SOKs proteins polymers (e.g. SOK1, SOK2, SOK3 and SOK4). Interacts with IPGA1 on microtubule upon mechanical stress to regulate microtubule organization. The cofactor is NAD(+). Expressed in cotyledons, leaves, roots, stems and floral buds.

Its subcellular location is the cytoplasm. It is found in the golgi apparatus. The protein resides in the trans-Golgi network. The protein localises to the cytoskeleton. Its function is as follows. Involved in controlling the equilibrium between tubular and stacked structures in the Golgi complex. Required for cortical microtubules (MTs) arrangement that confers cell shape. Cooperatively with IPGA1, negatively regulates cortical microtubules (CMTs) organization in response to mechanical stress and modulates pavement cells morphogenesis leading to puzzle shape, probably in an AAA1/KTN1-dependent manner. Regulates the width of leaves by controlling the polar elongation of leaf cells. Involved in the regulation of trichome branching. Seems to not be able to regulate gene transcription. Regulates epidermal cell divisions and elongation in a non-cell-autonomous manner (regulated by subepidermal cells), but regulates epidermal cell polarity, shape, trichome branching and elongation in a cell-autonomous manner. Negatively regulates growth in the petiole elongation. Prevents lipid peroxidation as a result of abiotic stress response. Is involved in the SUB-dependent signaling mechanism and may act in a membrane trafficking event around the trans-Golgi network. The chain is C-terminal binding protein AN from Arabidopsis thaliana (Mouse-ear cress).